We begin with the raw amino-acid sequence, 835 residues long: Leucine--tRNA ligase (835 aa).

The 'HIGH' region signature appears at 42 to 52; it reads PYPSGRIHMGH. The short motif at 612–616 is the 'KMSKS' region element; that stretch reads KMSKS. Lysine 615 contacts ATP.

It belongs to the class-I aminoacyl-tRNA synthetase family.

It localises to the cytoplasm. It carries out the reaction tRNA(Leu) + L-leucine + ATP = L-leucyl-tRNA(Leu) + AMP + diphosphate. The sequence is that of Leucine--tRNA ligase from Rhizorhabdus wittichii (strain DSM 6014 / CCUG 31198 / JCM 15750 / NBRC 105917 / EY 4224 / RW1) (Sphingomonas wittichii).